A 255-amino-acid polypeptide reads, in one-letter code: 5'-nucleotidase SurE (255 aa).

4 residues coordinate a divalent metal cation: D8, D9, S39, and N95.

This sequence belongs to the SurE nucleotidase family. Requires a divalent metal cation as cofactor.

It is found in the cytoplasm. The enzyme catalyses a ribonucleoside 5'-phosphate + H2O = a ribonucleoside + phosphate. In terms of biological role, nucleotidase that shows phosphatase activity on nucleoside 5'-monophosphates. The polypeptide is 5'-nucleotidase SurE (Rubrivivax gelatinosus (strain NBRC 100245 / IL144)).